We begin with the raw amino-acid sequence, 360 residues long: Putative FBD-associated F-box protein At5g56430 (360 aa).

Residues 1–53 form the F-box domain; the sequence is MRNISDLPNDLLVKILSLIPIKVAASTSLLSKRWGSVWKLIPTLDYDGTYSAA. 2 Kelch repeats span residues 140–186 and 235–285; these read IRYT…EQLD and VMCS…SVPE. The 51-residue stretch at 276-326 folds into the FBD domain; it reads KWEQPNSVPECLLVSLETVKWILYKGTQEEKDVVKYLLKNGNFIKTMSIRF.

This chain is Putative FBD-associated F-box protein At5g56430, found in Arabidopsis thaliana (Mouse-ear cress).